The sequence spans 260 residues: Probable 6-oxopurine nucleoside phosphorylase (260 aa).

Phosphate is bound by residues S9 and 49 to 50; that span reads RH. M182 serves as a coordination point for substrate. T183 lines the phosphate pocket. Residue 206–208 coordinates substrate; that stretch reads NMA.

It belongs to the PNP/MTAP phosphorylase family. MTAP subfamily. In terms of assembly, homohexamer. Dimer of a homotrimer.

It carries out the reaction a purine D-ribonucleoside + phosphate = a purine nucleobase + alpha-D-ribose 1-phosphate. It functions in the pathway purine metabolism; purine nucleoside salvage. Purine nucleoside phosphorylase which is highly specific for 6-oxopurine nucleosides. Cleaves guanosine or inosine to respective bases and sugar-1-phosphate molecules. Involved in purine salvage. This is Probable 6-oxopurine nucleoside phosphorylase from Moorella thermoacetica (strain ATCC 39073 / JCM 9320).